Here is a 359-residue protein sequence, read N- to C-terminus: Type-1 angiotensin II receptor A (359 aa).

The Extracellular segment spans residues 1-25 (MALNSSTEDGIKRIQDDCPRAGRHS). Asn-4 carries an N-linked (GlcNAc...) asparagine glycan. Residues Gln-15 and Asp-17 each coordinate angiotensin II. 2 cysteine pairs are disulfide-bonded: Cys-18–Cys-274 and Cys-101–Cys-180. Residues 26 to 55 (YIFVMIPTLYSIIFVVGIFGNSLVVIVIYF) traverse the membrane as a helical segment. At 56–61 (YMKLKT) the chain is on the cytoplasmic side. A helical membrane pass occupies residues 62-89 (VASVFLLNLALADLCFLLTLPLWAVYTA). Topologically, residues 90-98 (MEYRWPFGN) are extracellular. The helical transmembrane segment at 99-125 (HLCKIASASVSFNLYASVFLLTCLSID) threads the bilayer. Topologically, residues 126–141 (RYLAIVHPMKSRLRRT) are cytoplasmic. Residues 142 to 165 (MLVAKVTCIIIWLMAGLASLPAVI) form a helical membrane-spanning segment. Residues 166–190 (HRNVYFIENTNITVCAFHYESRNST) lie on the Extracellular side of the membrane. Arg-167 is an angiotensin II binding site. The N-linked (GlcNAc...) asparagine glycan is linked to Asn-176. Residues Phe-182, His-183, and Tyr-184 each contribute to the angiotensin II site. Asn-188 is a glycosylation site (N-linked (GlcNAc...) asparagine). A helical membrane pass occupies residues 191 to 216 (LPIGLGLTKNILGFLFPFLIILTSYT). Angiotensin II is bound at residue Lys-199. The Cytoplasmic portion of the chain corresponds to 217-239 (LIWKALKKAYEIQKNKPRNDDIF). The chain crosses the membrane as a helical span at residues 240–268 (RIIMAIVLFFFFSWVPHQIFTFLDVLIQL). The Extracellular portion of the chain corresponds to 269–278 (GVIHDCKIAD). A helical membrane pass occupies residues 279-304 (IVDTAMPITICIAYFNNCLNPLFYGF). Over 305–359 (LGKKFKKYFLQLLKYIPPKAKSHSSLSTKMSTLSYRPSDNMSSAAKKPASCSEVE) the chain is Cytoplasmic. Residues 335–347 (STLSYRPSDNMSS) are compositionally biased toward polar residues. Positions 335–359 (STLSYRPSDNMSSAAKKPASCSEVE) are disordered. Cys-355 carries S-palmitoyl cysteine lipidation.

This sequence belongs to the G-protein coupled receptor 1 family. Interacts with MAS1. Interacts with ARRB1. Interacts with FLNA (via filamin repeat 21); increases PKA-mediated phosphorylation of FLNA. In terms of processing, C-terminal Ser or Thr residues may be phosphorylated.

The protein localises to the cell membrane. Functionally, receptor for angiotensin II, a vasoconstricting peptide, which acts as a key regulator of blood pressure and sodium retention by the kidney. The activated receptor in turn couples to G-alpha proteins G(q) (GNAQ, GNA11, GNA14 or GNA15) and thus activates phospholipase C and increases the cytosolic Ca(2+) concentrations, which in turn triggers cellular responses such as stimulation of protein kinase C. This is Type-1 angiotensin II receptor A (Agtr1a) from Mus musculus (Mouse).